A 294-amino-acid chain; its full sequence is Acetylglutamate kinase (294 aa).

Substrate-binding positions include 63–64 (GG), arginine 85, and asparagine 188.

The protein belongs to the acetylglutamate kinase family. ArgB subfamily.

Its subcellular location is the cytoplasm. It catalyses the reaction N-acetyl-L-glutamate + ATP = N-acetyl-L-glutamyl 5-phosphate + ADP. Its pathway is amino-acid biosynthesis; L-arginine biosynthesis; N(2)-acetyl-L-ornithine from L-glutamate: step 2/4. Catalyzes the ATP-dependent phosphorylation of N-acetyl-L-glutamate. The chain is Acetylglutamate kinase from Methanococcus aeolicus (strain ATCC BAA-1280 / DSM 17508 / OCM 812 / Nankai-3).